Reading from the N-terminus, the 107-residue chain is Parvalbumin beta 2 (107 aa).

Residue Ser-1 is modified to N-acetylserine. EF-hand domains lie at 37-72 and 89-107; these read XSPD…FSAS and DADG…LVKQ. Asp-50, Asp-52, Ser-54, Phe-56, Glu-58, Glu-61, Asp-89, Asp-91, Asp-93, Met-95, and Glu-100 together coordinate Ca(2+).

Belongs to the parvalbumin family.

Its function is as follows. In muscle, parvalbumin is thought to be involved in relaxation after contraction. It binds two calcium ions. The protein is Parvalbumin beta 2 of Oncorhynchus mykiss (Rainbow trout).